Reading from the N-terminus, the 155-residue chain is SsrA-binding protein (155 aa).

It belongs to the SmpB family.

It localises to the cytoplasm. In terms of biological role, required for rescue of stalled ribosomes mediated by trans-translation. Binds to transfer-messenger RNA (tmRNA), required for stable association of tmRNA with ribosomes. tmRNA and SmpB together mimic tRNA shape, replacing the anticodon stem-loop with SmpB. tmRNA is encoded by the ssrA gene; the 2 termini fold to resemble tRNA(Ala) and it encodes a 'tag peptide', a short internal open reading frame. During trans-translation Ala-aminoacylated tmRNA acts like a tRNA, entering the A-site of stalled ribosomes, displacing the stalled mRNA. The ribosome then switches to translate the ORF on the tmRNA; the nascent peptide is terminated with the 'tag peptide' encoded by the tmRNA and targeted for degradation. The ribosome is freed to recommence translation, which seems to be the essential function of trans-translation. In Bordetella bronchiseptica (strain ATCC BAA-588 / NCTC 13252 / RB50) (Alcaligenes bronchisepticus), this protein is SsrA-binding protein.